The primary structure comprises 224 residues: MKNQYVPVITLDGPSASGKGTIARLVSQALGFHYLDSGALYRLVALAAMKRGVDAGDEQGVVGIARSLDVSFADSSIRLDGIDVSDEIRAEACGEYASKIAQYSALRVELLERQRDLRKLPGLVADGRDMGSVIFPDATLKIYLTANEEERARRRHKQLMEKGINASIAHLVLALRERDERDSKRVASPLQQCEDTRLLDTTGLNIDQVVGKVLGMYADSGSIE.

13–21 is a binding site for ATP; sequence GPSASGKGT.

The protein belongs to the cytidylate kinase family. Type 1 subfamily.

It is found in the cytoplasm. It catalyses the reaction CMP + ATP = CDP + ADP. The catalysed reaction is dCMP + ATP = dCDP + ADP. This Nitrosomonas eutropha (strain DSM 101675 / C91 / Nm57) protein is Cytidylate kinase.